The primary structure comprises 949 residues: Glycine dehydrogenase (decarboxylating) (949 aa).

K697 is modified (N6-(pyridoxal phosphate)lysine).

Belongs to the GcvP family. As to quaternary structure, the glycine cleavage system is composed of four proteins: P, T, L and H. Pyridoxal 5'-phosphate serves as cofactor.

It catalyses the reaction N(6)-[(R)-lipoyl]-L-lysyl-[glycine-cleavage complex H protein] + glycine + H(+) = N(6)-[(R)-S(8)-aminomethyldihydrolipoyl]-L-lysyl-[glycine-cleavage complex H protein] + CO2. Its function is as follows. The glycine cleavage system catalyzes the degradation of glycine. The P protein binds the alpha-amino group of glycine through its pyridoxal phosphate cofactor; CO(2) is released and the remaining methylamine moiety is then transferred to the lipoamide cofactor of the H protein. The sequence is that of Glycine dehydrogenase (decarboxylating) from Deinococcus radiodurans (strain ATCC 13939 / DSM 20539 / JCM 16871 / CCUG 27074 / LMG 4051 / NBRC 15346 / NCIMB 9279 / VKM B-1422 / R1).